The primary structure comprises 114 residues: Small ribosomal subunit protein eS25 (114 aa).

Positions 1 to 33 (MAPKKDKAPPPSSKPAKSGGKQKKKKWSKGKQK) are disordered. The segment covering 20 to 30 (GKQKKKKWSKG) has biased composition (basic residues).

It belongs to the eukaryotic ribosomal protein eS25 family.

This Amaranthus cruentus (Purple amaranth) protein is Small ribosomal subunit protein eS25 (RPS25).